Consider the following 202-residue polypeptide: Transmembrane 4 L6 family member 4 (202 aa).

The Cytoplasmic portion of the chain corresponds to 1–9 (MCTGGCARC). The chain crosses the membrane as a helical span at residues 10 to 30 (LGGTLIPLAVFGLLANILLFF). Residues 31-48 (PGGKVVNDKSHLSDEVWY) are Extracellular-facing. A helical membrane pass occupies residues 49 to 69 (FGGILGSGVLMIFPALVFLGL). At 70 to 93 (QNNDCCGCCGNEGCGKRFAMFTST) the chain is on the cytoplasmic side. Residues 94-114 (LFAVIGFLGAGYSFIVSAVSI) traverse the membrane as a helical segment. Residues 115 to 158 (NKGPKCFMANGTWGYPFHDGDYLKDQALWSECEEPRDVVPWNLT) are Extracellular-facing. Asn156 is a glycosylation site (N-linked (GlcNAc...) asparagine). The helical transmembrane segment at 159–179 (LFSILLVIGGIQMVLCAIQVI) threads the bilayer. The Cytoplasmic portion of the chain corresponds to 180–202 (NGLLGTLCGDCQCCGCCGGDGPV).

Belongs to the L6 tetraspanin family.

Its subcellular location is the membrane. Its function is as follows. Regulates the adhesive and proliferative status of intestinal epithelial cells. Can mediate density-dependent cell proliferation. The sequence is that of Transmembrane 4 L6 family member 4 (Tm4sf4) from Mus musculus (Mouse).